We begin with the raw amino-acid sequence, 161 residues long: Phosphopantetheine adenylyltransferase (161 aa).

Thr-10 contributes to the substrate binding site. Residues 10-11 (TF) and His-18 each bind ATP. Substrate is bound by residues Lys-42, Met-74, and Arg-88. ATP is bound by residues 89 to 91 (GLR), Glu-99, and 124 to 130 (WSFISSS).

This sequence belongs to the bacterial CoaD family. In terms of assembly, homohexamer. The cofactor is Mg(2+).

The protein resides in the cytoplasm. The catalysed reaction is (R)-4'-phosphopantetheine + ATP + H(+) = 3'-dephospho-CoA + diphosphate. It participates in cofactor biosynthesis; coenzyme A biosynthesis; CoA from (R)-pantothenate: step 4/5. Its function is as follows. Reversibly transfers an adenylyl group from ATP to 4'-phosphopantetheine, yielding dephospho-CoA (dPCoA) and pyrophosphate. In Serratia proteamaculans (strain 568), this protein is Phosphopantetheine adenylyltransferase.